The primary structure comprises 276 residues: Inositol-1-monophosphatase ImpA (276 aa).

Mg(2+) contacts are provided by E74, D90, I92, and D93. A substrate-binding site is contributed by E74. Residues 92-95 (IDGT), R192, and D221 each bind substrate. Position 221 (D221) interacts with Mg(2+).

This sequence belongs to the inositol monophosphatase superfamily. The cofactor is Mg(2+).

It catalyses the reaction a myo-inositol phosphate + H2O = myo-inositol + phosphate. It participates in polyol metabolism; myo-inositol biosynthesis; myo-inositol from D-glucose 6-phosphate: step 2/2. In terms of biological role, catalyzes the dephosphorylation of inositol 1-phosphate (I-1-P) to yield free myo-inositol, a key metabolite in mycobacteria. This is Inositol-1-monophosphatase ImpA (impA) from Mycolicibacterium smegmatis (strain ATCC 700084 / mc(2)155) (Mycobacterium smegmatis).